A 320-amino-acid chain; its full sequence is Coproporphyrin III ferrochelatase (320 aa).

2 residues coordinate Fe(2+): His194 and Glu273.

Belongs to the ferrochelatase family.

The protein resides in the cytoplasm. It carries out the reaction Fe-coproporphyrin III + 2 H(+) = coproporphyrin III + Fe(2+). The protein operates within porphyrin-containing compound metabolism; protoheme biosynthesis. Functionally, involved in coproporphyrin-dependent heme b biosynthesis. Catalyzes the insertion of ferrous iron into coproporphyrin III to form Fe-coproporphyrin III. This is Coproporphyrin III ferrochelatase from Symbiobacterium thermophilum (strain DSM 24528 / JCM 14929 / IAM 14863 / T).